The primary structure comprises 520 residues: MSDHLIPSIPTPAAAPAAAPAVDDNQLIAERREKLKLMRAAQAEGKGVAFPNDFKPGHRAAALIEAHGAADAEALEAQAVAVSVAGRMMLKRVMGKASFATVQDATSRIQLYVTRDAIGEEAYAEFKRWDLGDIVGAEGTLMKTKTGELSVKVTKLRLLTKSLRPLPDKFHGMADQEQKYRQRYVDLITDETARVRFTARSKAVSALREFMVGHGFLEVETPMLHPIPGGANAKPFKTHHNALDQEMFLRIAPELYLKRLIVGGFERVFEINRSYRNEGISVRHNPEFTMMEFYAAYWNYRDLMDFTETLIRTIADKAVGTQQLTYQGKPVDLTQPFERLTIREAILKYTEAGTGVDDSAWLINALRKIGLSEEKDKLSQRSLASLQVMYFEETVEEKLWQPTFIMEHPTEISPLARANDERPEVTERFELYITGREFGNGFSELNDAEDQAARFNAQVAAKDSGDDEAMFYDHDFVRALEYGMPPTGGCGIGIDRLMMLLTDSPSIRDVILFPALRRES.

The segment at 1–21 (MSDHLIPSIPTPAAAPAAAPA) is disordered. Residues 12–21 (PAAAPAAAPA) show a composition bias toward low complexity. Mg(2+) is bound by residues Glu430 and Glu437.

It belongs to the class-II aminoacyl-tRNA synthetase family. As to quaternary structure, homodimer. Mg(2+) serves as cofactor.

The protein localises to the cytoplasm. It carries out the reaction tRNA(Lys) + L-lysine + ATP = L-lysyl-tRNA(Lys) + AMP + diphosphate. The sequence is that of Lysine--tRNA ligase from Variovorax paradoxus (strain S110).